The sequence spans 329 residues: tRNA uridine(34) hydroxylase (329 aa).

The region spanning 123–217 (SDPETVLIDT…YLEEVPKEKS (95 aa)) is the Rhodanese domain. The Cysteine persulfide intermediate role is filled by cysteine 177. Residues 310–329 (LNKQKKQQAKEAARKKTEKN) form a disordered region. A compositionally biased stretch (basic and acidic residues) spans 317–329 (QAKEAARKKTEKN).

The protein belongs to the TrhO family.

The catalysed reaction is uridine(34) in tRNA + AH2 + O2 = 5-hydroxyuridine(34) in tRNA + A + H2O. Its function is as follows. Catalyzes oxygen-dependent 5-hydroxyuridine (ho5U) modification at position 34 in tRNAs. This Francisella tularensis subsp. novicida (strain U112) protein is tRNA uridine(34) hydroxylase.